Here is a 194-residue protein sequence, read N- to C-terminus: Histone H1.0 (194 aa).

The residue at position 1 (Met1) is an N-acetylmethionine. Low complexity predominate over residues Met1–Ala11. The tract at residues Met1–Ser29 is disordered. Thr2 is modified (N-acetylthreonine; in Histone H1.0, N-terminally processed). Residues Asp24 to Lys97 form the H15 domain. Citrulline is present on Arg42. Positions Thr84–Lys194 are disordered. Ser104 is modified (ADP-ribosylserine). Residues Val105–Lys194 show a composition bias toward basic residues.

The protein belongs to the histone H1/H5 family. ADP-ribosylated on Ser-104 in response to DNA damage.

It localises to the nucleus. It is found in the chromosome. Histones H1 are necessary for the condensation of nucleosome chains into higher-order structures. The histones H1.0 are found in cells that are in terminal stages of differentiation or that have low rates of cell division. This Pongo abelii (Sumatran orangutan) protein is Histone H1.0 (H1-0).